We begin with the raw amino-acid sequence, 402 residues long: Formate-dependent phosphoribosylglycinamide formyltransferase (402 aa).

N(1)-(5-phospho-beta-D-ribosyl)glycinamide-binding positions include 25-26 (EL) and Glu-85. ATP contacts are provided by residues Arg-118, Lys-159, 164 to 169 (SSGKGQ), 199 to 202 (EQFV), and Glu-207. Residues 123–318 (RLASEELGLP…EFELHAKAVL (196 aa)) enclose the ATP-grasp domain. Mg(2+)-binding residues include Glu-277 and Glu-289. Residues Asp-296, Lys-365, and 372–373 (RR) each bind N(1)-(5-phospho-beta-D-ribosyl)glycinamide.

This sequence belongs to the PurK/PurT family. As to quaternary structure, homodimer.

It catalyses the reaction N(1)-(5-phospho-beta-D-ribosyl)glycinamide + formate + ATP = N(2)-formyl-N(1)-(5-phospho-beta-D-ribosyl)glycinamide + ADP + phosphate + H(+). The protein operates within purine metabolism; IMP biosynthesis via de novo pathway; N(2)-formyl-N(1)-(5-phospho-D-ribosyl)glycinamide from N(1)-(5-phospho-D-ribosyl)glycinamide (formate route): step 1/1. Involved in the de novo purine biosynthesis. Catalyzes the transfer of formate to 5-phospho-ribosyl-glycinamide (GAR), producing 5-phospho-ribosyl-N-formylglycinamide (FGAR). Formate is provided by PurU via hydrolysis of 10-formyl-tetrahydrofolate. In Corynebacterium efficiens (strain DSM 44549 / YS-314 / AJ 12310 / JCM 11189 / NBRC 100395), this protein is Formate-dependent phosphoribosylglycinamide formyltransferase.